The chain runs to 387 residues: Phosphoglycerate kinase (387 aa).

Substrate-binding positions include 21-23 (DLN), arginine 36, 59-62 (HLGR), arginine 113, and arginine 146. Residues lysine 197, glutamate 314, and 340–343 (GGDT) each bind ATP.

The protein belongs to the phosphoglycerate kinase family. In terms of assembly, monomer.

It localises to the cytoplasm. The enzyme catalyses (2R)-3-phosphoglycerate + ATP = (2R)-3-phospho-glyceroyl phosphate + ADP. Its pathway is carbohydrate degradation; glycolysis; pyruvate from D-glyceraldehyde 3-phosphate: step 2/5. This chain is Phosphoglycerate kinase, found in Klebsiella pneumoniae (strain 342).